We begin with the raw amino-acid sequence, 210 residues long: Uridine kinase (210 aa).

13–20 (GGSGSGKT) contacts ATP.

Belongs to the uridine kinase family.

The protein resides in the cytoplasm. The enzyme catalyses uridine + ATP = UMP + ADP + H(+). It catalyses the reaction cytidine + ATP = CMP + ADP + H(+). Its pathway is pyrimidine metabolism; CTP biosynthesis via salvage pathway; CTP from cytidine: step 1/3. It participates in pyrimidine metabolism; UMP biosynthesis via salvage pathway; UMP from uridine: step 1/1. The sequence is that of Uridine kinase from Oceanobacillus iheyensis (strain DSM 14371 / CIP 107618 / JCM 11309 / KCTC 3954 / HTE831).